Here is a 351-residue protein sequence, read N- to C-terminus: uncharacterized protein (351 aa).

This is an uncharacterized protein from Gallus gallus (Chicken).